Consider the following 387-residue polypeptide: F-box/LRR-repeat/kelch-repeat protein At2g29770 (387 aa).

Residues 1-34 form a disordered region; sequence MVFISETSDDGSNGGDPTKNPQEEEEENLPPIPQ. Residues 31 to 78 enclose the F-box domain; that stretch reads PIPQGIPDELIESTVLLIRRCHYPTLSLLSKTFRRVISSSELYKSRFI. An LRR 1 repeat occupies 105-128; it reads CNIPRNISLHLREIKSLPPLNHGS. 2 Kelch repeats span residues 136–183 and 184–231; these read HMYV…VIDG and RIYV…FVTS. An LRR 2 repeat occupies 196–219; sequence DHWIEVFDIENRIWSSVPHHRYCN.

The sequence is that of F-box/LRR-repeat/kelch-repeat protein At2g29770 from Arabidopsis thaliana (Mouse-ear cress).